The following is a 908-amino-acid chain: Protein translocase subunit SecA (908 aa).

ATP contacts are provided by residues Gln87, 105-109 (GEGKT), and Asp512. Residues 865–908 (GGDDGSDEMMAHTPMIRDGDKVGRNDPCPCGSGRKYKQCHGKLS) form a disordered region. The span at 879 to 888 (MIRDGDKVGR) shows a compositional bias: basic and acidic residues. 4 residues coordinate Zn(2+): Cys892, Cys894, Cys903, and His904. Residues 898–908 (RKYKQCHGKLS) are compositionally biased toward basic residues.

The protein belongs to the SecA family. In terms of assembly, monomer and homodimer. Part of the essential Sec protein translocation apparatus which comprises SecA, SecYEG and auxiliary proteins SecDF-YajC and YidC. The cofactor is Zn(2+).

The protein localises to the cell inner membrane. The protein resides in the cytoplasm. It catalyses the reaction ATP + H2O + cellular proteinSide 1 = ADP + phosphate + cellular proteinSide 2.. Functionally, part of the Sec protein translocase complex. Interacts with the SecYEG preprotein conducting channel. Has a central role in coupling the hydrolysis of ATP to the transfer of proteins into and across the cell membrane, serving both as a receptor for the preprotein-SecB complex and as an ATP-driven molecular motor driving the stepwise translocation of polypeptide chains across the membrane. The sequence is that of Protein translocase subunit SecA from Shewanella sp. (strain MR-4).